Consider the following 60-residue polypeptide: MTISNSLKLLNIGNAIKTNEIDYNNKKFLNNNINQNINETSKWVPNILWRGQGGKNIIAF.

This is an uncharacterized protein from Dictyostelium discoideum (Social amoeba).